Consider the following 345-residue polypeptide: Hemin transport protein HmuS (345 aa).

This sequence to Y.enterocolitica HemS.

In terms of biological role, part of the binding-protein-dependent transport system for hemin. The polypeptide is Hemin transport protein HmuS (hmuS) (Yersinia pestis).